We begin with the raw amino-acid sequence, 809 residues long: uncharacterized protein (809 aa).

The region spanning 19–206 (HDLRLVLVAS…FTGMSAITIV (188 aa)) is the MHYT domain. Helical transmembrane passes span 23–43 (LVLVASAVCLAGCFTTFRLYS), 57–77 (LLLTGLVAGSSVWATHFIAMV), 92–112 (TLLSLMIAALFMASGFAVASA), 122–142 (GGVLIGLGVAAMHYMGMSAFV), 152–172 (ATVGMSAVLGVGGATAALLLA), 186–206 (GMLCLGIVMLHFTGMSAITIV), and 224–244 (TLAVGSITSMIILGGLGAVAI). In terms of domain architecture, PAS spans 254–317 (ERIRRLANAA…ADPSREDVRR (64 aa)). The region spanning 402-536 (ESLAVICIDL…GRGVYRFFKR (135 aa)) is the GGDEF domain. Positions 545–795 (RRNLARDLRQ…ALTMWTTAGD (251 aa)) constitute an EAL domain.

It localises to the cell membrane. This is an uncharacterized protein from Caulobacter vibrioides (strain ATCC 19089 / CIP 103742 / CB 15) (Caulobacter crescentus).